The sequence spans 173 residues: Glycine cleavage system H protein, mitochondrial (173 aa).

A mitochondrion-targeting transit peptide spans 1 to 48 (MALRVVRSVRALLCTLRAVPSPAAPCPPRPWQLGVGAVRTLRTGPALL). Residues 66–148 (IGTVGISNFA…YEDGWLIKMT (83 aa)) enclose the Lipoyl-binding domain. At Lys-107 the chain carries N6-lipoyllysine.

This sequence belongs to the GcvH family. In terms of assembly, interacts with GLDC. The glycine cleavage system is composed of four proteins: P (GLDC), T (GCST), L (DLD) and H (GCSH). (R)-lipoate serves as cofactor.

It is found in the mitochondrion. Functionally, the glycine cleavage system catalyzes the degradation of glycine. The H protein (GCSH) shuttles the methylamine group of glycine from the P protein (GLDC) to the T protein (GCST). Has a pivotal role in the lipoylation of enzymes involved in cellular energetics such as the mitochondrial dihydrolipoyllysine-residue acetyltransferase component of pyruvate dehydrogenase complex (DLAT), and the mitochondrial dihydrolipoyllysine-residue succinyltransferase component of 2-oxoglutarate dehydrogenase complex (DLST). This chain is Glycine cleavage system H protein, mitochondrial, found in Homo sapiens (Human).